The primary structure comprises 178 residues: Imidazoleglycerol-phosphate dehydratase (178 aa).

It belongs to the imidazoleglycerol-phosphate dehydratase family.

The protein localises to the cytoplasm. It catalyses the reaction D-erythro-1-(imidazol-4-yl)glycerol 3-phosphate = 3-(imidazol-4-yl)-2-oxopropyl phosphate + H2O. Its pathway is amino-acid biosynthesis; L-histidine biosynthesis; L-histidine from 5-phospho-alpha-D-ribose 1-diphosphate: step 6/9. The protein is Imidazoleglycerol-phosphate dehydratase of Archaeoglobus fulgidus (strain ATCC 49558 / DSM 4304 / JCM 9628 / NBRC 100126 / VC-16).